The sequence spans 427 residues: Amino acid transporter AVT3A (427 aa).

The disordered stretch occupies residues 1–35; the sequence is MRYDQEAGSSSHSLPSGSSSHSLPPTEDTPLLGPR. Residues 1-42 are Cytoplasmic-facing; that stretch reads MRYDQEAGSSSHSLPSGSSSHSLPPTEDTPLLGPRTLSSQPK. A compositionally biased stretch (low complexity) spans 8–24; that stretch reads GSSSHSLPSGSSSHSLP. A helical membrane pass occupies residues 43–63; that stretch reads TFANVFIAIVGAGVLGLPYTF. Residues 64–69 are Vacuolar-facing; that stretch reads KKTGWL. A helical membrane pass occupies residues 70–90; that stretch reads LGLLTLLFVSSLTFFCMMLLV. Topologically, residues 91-122 are cytoplasmic; the sequence is HTRRKLESLSGFNSITSFGDLGESVCGPAGRL. The helical transmembrane segment at 123-143 threads the bilayer; sequence VVDVMLVLSQSGFCVSYLIFV. At 144–157 the chain is on the vacuolar side; it reads ATTMANLLSRGTEH. The helical transmembrane segment at 158–178 threads the bilayer; that stretch reads ILGLDAASIYLWGCFPFQLGL. At 179 to 186 the chain is on the cytoplasmic side; that stretch reads NSIPSLTH. A helical membrane pass occupies residues 187–207; the sequence is LAPLSIFADIVDVAATLVVMV. The Vacuolar segment spans residues 208-227; that stretch reads QDVFIFLKRRPPLRVFGGVS. Residues 228–248 traverse the membrane as a helical segment; it reads VFFYGLGVAVYAFEGIGMVLP. Residues 249 to 262 are Cytoplasmic-facing; sequence LELEAKYKDKFGRA. The helical transmembrane segment at 263–283 threads the bilayer; it reads LGLAMGLISIMYGAFGLLGYM. Topologically, residues 284–300 are vacuolar; the sequence is AYGEETKDIITTNLGTG. A helical transmembrane segment spans residues 301–321; the sequence is VVSTLVQLGLAINLFFTFPLM. Topologically, residues 322–339 are cytoplasmic; it reads MQPVYEVVERRLCSSRYS. The helical transmembrane segment at 340-360 threads the bilayer; it reads VWVRWATVLVVTLVALLVPNF. Over 361–362 the chain is Vacuolar; that stretch reads AD. A helical membrane pass occupies residues 363-383; it reads FLSLVGSSVCVVLGFVLPSLF. Over 384 to 396 the chain is Cytoplasmic; sequence HLQAFKNELSITR. Residues 397-417 traverse the membrane as a helical segment; sequence IVVDVLVFLIGVMIAITGTWT. Residues 418–427 are Vacuolar-facing; that stretch reads AVHEILTSKA.

This sequence belongs to the amino acid/polyamine transporter 2 family. Amino acid/auxin permease (AAAP) (TC 2.A.18.8) subfamily. As to expression, ubiquitous.

It localises to the vacuole membrane. In terms of biological role, translocates preferentially neutral amino acids and to a lesser extent aromatic amino acids from the vacuole to the cytoplasm. Requires ATP for function. In Arabidopsis thaliana (Mouse-ear cress), this protein is Amino acid transporter AVT3A.